Here is a 1168-residue protein sequence, read N- to C-terminus: Protein VARIATION IN COMPOUND TRIGGERED ROOT growth response (1168 aa).

In terms of domain architecture, TIR spans 10 to 171 (WVYDVFLSFS…EIANDVLAKL (162 aa)). The active site involves Glu85. The region spanning 187 to 452 (EDHIANMSVL…ACLFNHVKVR (266 aa)) is the NB-ARC domain. 10 LRR repeats span residues 539–562 (TSKV…LFLD), 606–629 (LRNL…AMSF), 631–653 (CLKE…SKAT), 676–699 (LNKL…GFNL), 701–720 (SLDY…PEFA), 721–744 (TNIS…YFKN), 795–820 (LNNL…NLES), 839–865 (STNI…FFNL), 873–896 (CREL…SFSN), and 1065–1089 (NVPL…DWRS).

The protein belongs to the disease resistance NB-LRR family. As to quaternary structure, part of a nuclear protein complex made of VICTR, PAD4 and EDS1. Interacts (via TIR domain) with PAD4 and EDS1.

Its subcellular location is the cytoplasm. The protein localises to the nucleus. The catalysed reaction is NAD(+) + H2O = ADP-D-ribose + nicotinamide + H(+). Its function is as follows. Disease resistance protein of the TIR-NB-LRR-type. Part of the RPS6 locus that contains a cluster of several paralogous disease resistance (R) genes. Resistance proteins guard the plant against pathogens that contain an appropriate avirulence protein via an indirect interaction with this avirulence protein. That triggers a defense system including the hypersensitive response, which restricts the pathogen growth. Required for [5-(3,4-dichlorophenyl)furan-2-yl]-piperidine-1-ylmethanethione-(DFPM-) induced root growth arrest due to reduced number of meristem cells in the division zone of the primary root and inhibition of abscisic acid- (ABA-) induced stomatal closing. This chain is Protein VARIATION IN COMPOUND TRIGGERED ROOT growth response (VICTR), found in Arabidopsis thaliana (Mouse-ear cress).